The primary structure comprises 288 residues: Mediator of RNA polymerase II transcription subunit 8 (288 aa).

Residues 4–58 (EELKQLELLRNRFAQLTSNLGSLRTSVSNSNPLPTYESLQASVNILQANIRSIQD) are a coiled coil. Disordered stretches follow at residues 122–150 (GGVH…APQD), 191–245 (VRTG…GGGM), and 266–288 (PGNV…APPR). Composition is skewed to acidic residues over residues 131-148 (DYDD…DDAP) and 200-221 (EESE…EDEA). Positions 180–228 (TAEERAAGIENVRTGLRQTLEESEDDDEDEEEEEEDEEEDEAAAAAGNA) form a coiled coil. Gly residues predominate over residues 227 to 245 (NAGGLATGAGGSAAAGGGM).

It belongs to the Mediator complex subunit 8 family. In terms of assembly, component of the Mediator complex.

The protein localises to the nucleus. Functionally, component of the Mediator complex, a coactivator involved in the regulated transcription of nearly all RNA polymerase II-dependent genes. Mediator functions as a bridge to convey information from gene-specific regulatory proteins to the basal RNA polymerase II transcription machinery. Mediator is recruited to promoters by direct interactions with regulatory proteins and serves as a scaffold for the assembly of a functional preinitiation complex with RNA polymerase II and the general transcription factors. The protein is Mediator of RNA polymerase II transcription subunit 8 (MED8) of Chaetomium globosum (strain ATCC 6205 / CBS 148.51 / DSM 1962 / NBRC 6347 / NRRL 1970) (Soil fungus).